Consider the following 243-residue polypeptide: Cytochrome c1, heme protein (243 aa).

The Mitochondrial intermembrane portion of the chain corresponds to 1 to 201 (GVDSHPPALP…CSNPWWDERK (201 aa)). The 190-residue stretch at 5–194 (HPPALPWPHF…VTCFLEWCSN (190 aa)) folds into the Cytochrome c domain. The heme site is built by Cys39, His40, and Met159. The helical transmembrane segment at 202-221 (LLGYKTIATLAVIAVSSGYY) threads the bilayer. Over 222 to 243 (NRFLSGLWRSRRLAFRPFNYSK) the chain is Mitochondrial matrix.

This sequence belongs to the cytochrome c family. In terms of assembly, component of the ubiquinol-cytochrome c oxidoreductase (cytochrome b-c1 complex, complex III, CIII), a multisubunit enzyme composed of 3 respiratory subunits cytochrome b, cytochrome c1 and Rieske protein, 2 core protein subunits, and additional low-molecular weight protein subunits. The complex exists as an obligatory dimer and forms supercomplexes (SCs) in the inner mitochondrial membrane with cytochrome c oxidase (complex IV, CIV). Heme serves as cofactor.

The protein localises to the mitochondrion inner membrane. The catalysed reaction is a quinol + 2 Fe(III)-[cytochrome c](out) = a quinone + 2 Fe(II)-[cytochrome c](out) + 2 H(+)(out). Functionally, component of the ubiquinol-cytochrome c oxidoreductase, a multisubunit transmembrane complex that is part of the mitochondrial electron transport chain which drives oxidative phosphorylation. The respiratory chain contains 3 multisubunit complexes succinate dehydrogenase (complex II, CII), ubiquinol-cytochrome c oxidoreductase (cytochrome b-c1 complex, complex III, CIII) and cytochrome c oxidase (complex IV, CIV), that cooperate to transfer electrons derived from NADH and succinate to molecular oxygen, creating an electrochemical gradient over the inner membrane that drives transmembrane transport and the ATP synthase. The cytochrome b-c1 complex catalyzes electron transfer from ubiquinol to cytochrome c, linking this redox reaction to translocation of protons across the mitochondrial inner membrane, with protons being carried across the membrane as hydrogens on the quinol. In the process called Q cycle, 2 protons are consumed from the matrix, 4 protons are released into the intermembrane space and 2 electrons are passed to cytochrome c. Cytochrome c1 is a catalytic core subunit containing a c-type heme. It transfers electrons from the [2Fe-2S] iron-sulfur cluster of the Rieske protein to cytochrome c. In Euglena gracilis, this protein is Cytochrome c1, heme protein.